The primary structure comprises 458 residues: UPF0210 protein MmarC6_1246 (458 aa).

Belongs to the UPF0210 family.

This Methanococcus maripaludis (strain C6 / ATCC BAA-1332) protein is UPF0210 protein MmarC6_1246.